An 879-amino-acid polypeptide reads, in one-letter code: Valine--tRNA ligase (879 aa).

A 'HIGH' region motif is present at residues 43–53 (PNVTGVLHMGH). The 'KMSKS' region motif lies at 534–538 (KMSKS). Residue Lys-537 participates in ATP binding. Positions 807-878 (LGNMIDVEAE…LKESIAALKK (72 aa)) form a coiled coil.

It belongs to the class-I aminoacyl-tRNA synthetase family. ValS type 1 subfamily. Monomer.

It localises to the cytoplasm. It carries out the reaction tRNA(Val) + L-valine + ATP = L-valyl-tRNA(Val) + AMP + diphosphate. Catalyzes the attachment of valine to tRNA(Val). As ValRS can inadvertently accommodate and process structurally similar amino acids such as threonine, to avoid such errors, it has a 'posttransfer' editing activity that hydrolyzes mischarged Thr-tRNA(Val) in a tRNA-dependent manner. This chain is Valine--tRNA ligase, found in Bacteroides thetaiotaomicron (strain ATCC 29148 / DSM 2079 / JCM 5827 / CCUG 10774 / NCTC 10582 / VPI-5482 / E50).